Reading from the N-terminus, the 718-residue chain is U-box domain-containing protein 5 (718 aa).

One can recognise a U-box domain in the interval 218–292 (TLPEKFKCTL…SEWCAKNGLD (75 aa)). ARM repeat units follow at residues 493–532 (PHGP…NLSS), 534–571 (MEIC…NLCS), and 573–613 (EKGR…QLCV). The disordered stretch occupies residues 662–704 (KEEEEEVSSRPEGRTTASPTSQVVTPVTHPEPVKITPSPKKSG). Residues 676–686 (TTASPTSQVVT) are compositionally biased toward polar residues.

It carries out the reaction S-ubiquitinyl-[E2 ubiquitin-conjugating enzyme]-L-cysteine + [acceptor protein]-L-lysine = [E2 ubiquitin-conjugating enzyme]-L-cysteine + N(6)-ubiquitinyl-[acceptor protein]-L-lysine.. It functions in the pathway protein modification; protein ubiquitination. Functions as an E3 ubiquitin ligase. This is U-box domain-containing protein 5 (PUB5) from Arabidopsis thaliana (Mouse-ear cress).